Reading from the N-terminus, the 378-residue chain is Alcohol dehydrogenase (378 aa).

Residues Asp195, His199, His262, and His274 each contribute to the Fe cation site.

This sequence belongs to the iron-containing alcohol dehydrogenase family. It depends on Fe(2+) as a cofactor. The cofactor is Mn(2+).

The enzyme catalyses a primary alcohol + NAD(+) = an aldehyde + NADH + H(+). It carries out the reaction butan-1-ol + NAD(+) = butanal + NADH + H(+). The catalysed reaction is hexan-1-ol + NAD(+) = hexanal + NADH + H(+). It catalyses the reaction ethanol + NAD(+) = acetaldehyde + NADH + H(+). Its function is as follows. Thermostable type III alcohol dehydrogenase. For oxidation activity, the best substrates are 1-butanol and 1-hexanol, followed by ethanol. Shows lower activity with ethylene glycol, isopentanol, isopropanol and glycerol. Displays higher reduction activity in the presence of butanal, followed by acetaldehyde. Has lower activity with hexanal and acetone. This is Alcohol dehydrogenase from Thermococcus barophilus.